We begin with the raw amino-acid sequence, 41 residues long: ADDYDDEVLPDARGHRPIDRKREELPSLRPAPPPISGGGYR.

The tract at residues 1–41 (ADDYDDEVLPDARGHRPIDRKREELPSLRPAPPPISGGGYR) is disordered. The residue at position 4 (Tyr-4) is a Sulfotyrosine. Basic and acidic residues predominate over residues 10–26 (PDARGHRPIDRKREELP). The tract at residues 14-16 (GHR) is beta-chain polymerization, binding distal domain of another fibrin.

Heterohexamer; disulfide linked. Contains 2 sets of 3 non-identical chains (alpha, beta and gamma). The 2 heterotrimers are in head to head conformation with the N-termini in a small central domain. Post-translationally, conversion of fibrinogen to fibrin is triggered by thrombin, which cleaves fibrinopeptides A and B from alpha and beta chains, and thus exposes the N-terminal polymerization sites responsible for the formation of the soft clot.

The protein resides in the secreted. Functionally, cleaved by the protease thrombin to yield monomers which, together with fibrinogen alpha (FGA) and fibrinogen gamma (FGG), polymerize to form an insoluble fibrin matrix. Fibrin has a major function in hemostasis as one of the primary components of blood clots. In addition, functions during the early stages of wound repair to stabilize the lesion and guide cell migration during re-epithelialization. Was originally thought to be essential for platelet aggregation, based on in vitro studies using anticoagulated blood. However subsequent studies have shown that it is not absolutely required for thrombus formation in vivo. Enhances expression of SELP in activated platelets. Maternal fibrinogen is essential for successful pregnancy. Fibrin deposition is also associated with infection, where it protects against IFNG-mediated hemorrhage. May also facilitate the antibacterial immune response via both innate and T-cell mediated pathways. The chain is Fibrinogen beta chain (FGB) from Oryctolagus cuniculus (Rabbit).